A 209-amino-acid chain; its full sequence is Tumor suppressor candidate gene 1 protein (209 aa).

Disordered stretches follow at residues 1–55 (MWRM…DGAR), 111–157 (ALRL…LRAR), and 172–209 (LHLEQRGPRPSGDKEEQPLQEPDSGLRSRDSEPSGPWL). A compositionally biased stretch (gly residues) spans 14–47 (CCGGDGAADGRGPGRSGRARGGGSPSGGGGGVGW). Positions 70-114 (LEAIRARDEWDRQNARLRQENARLRLENRRLKRENRSLFRQALRL) form a coiled coil. The span at 125 to 149 (EARRVPEEASTNRRARDSGREDEPG) shows a compositional bias: basic and acidic residues. A Phosphoserine modification is found at S150. Residues 152-177 (RALRARLEKLEAMYRRALLQLHLEQR) adopt a coiled-coil conformation. Residues 174–188 (LEQRGPRPSGDKEEQ) show a composition bias toward basic and acidic residues.

Widely expressed at low level. Expressed at higher level in testis, weakly expressed in muscle, colon, lung and spleen. Not detected in 3 non small cell lung carcinoma (NSCLC) cell lines with homozygous deletion of the 9p region, while it is down-regulated in 3 other tumor cell lines.

In Homo sapiens (Human), this protein is Tumor suppressor candidate gene 1 protein (TUSC1).